Consider the following 1098-residue polypeptide: WD repeat-containing protein 72 (1098 aa).

WD repeat units follow at residues 15–54, 60–102, 158–196, 315–359, 399–438, 456–501, 504–549, and 552–591; these read APPH…KISA, GHSA…CVEK, WINC…NSIQ, ENKN…VSKF, AGTA…KARL, GHHQ…ILHK, LEAG…CLLR, and KHLF…LERH. Phosphoserine is present on residues S1077 and S1079.

The protein localises to the cytoplasmic vesicle. Functionally, plays a major role in formation of tooth enamel. Specifically required during the maturation phase of amelogenesis for normal formation of the enamel matrix and clearance of enamel proteins. May be involved in localization of the calcium transporter SLC24A4 to the ameloblast cell membrane. The protein is WD repeat-containing protein 72 (WDR72) of Pongo abelii (Sumatran orangutan).